A 289-amino-acid chain; its full sequence is 4-hydroxy-tetrahydrodipicolinate synthase (289 aa).

A pyruvate-binding site is contributed by threonine 43. Residue tyrosine 131 is the Proton donor/acceptor of the active site. Lysine 160 acts as the Schiff-base intermediate with substrate in catalysis. Isoleucine 200 lines the pyruvate pocket.

Belongs to the DapA family. In terms of assembly, homotetramer; dimer of dimers.

The protein localises to the cytoplasm. The enzyme catalyses L-aspartate 4-semialdehyde + pyruvate = (2S,4S)-4-hydroxy-2,3,4,5-tetrahydrodipicolinate + H2O + H(+). It participates in amino-acid biosynthesis; L-lysine biosynthesis via DAP pathway; (S)-tetrahydrodipicolinate from L-aspartate: step 3/4. In terms of biological role, catalyzes the condensation of (S)-aspartate-beta-semialdehyde [(S)-ASA] and pyruvate to 4-hydroxy-tetrahydrodipicolinate (HTPA). This chain is 4-hydroxy-tetrahydrodipicolinate synthase, found in Methanococcus vannielii (strain ATCC 35089 / DSM 1224 / JCM 13029 / OCM 148 / SB).